The primary structure comprises 731 residues: Nucleolar GTP-binding protein 2 (731 aa).

M1 bears the N-acetylmethionine mark. Residues 1–33 are disordered; sequence MVKPKYKGRSTINPSKASTNPDRVQGAGGQNMR. Over residues 10–22 the composition is skewed to polar residues; sequence STINPSKASTNPD. Residues 207–368 form the CP-type G domain; it reads WGELYKVIDS…LIDCPGVVYP (162 aa). Residues 317–324 and 361–365 contribute to the GTP site; these read GYPNVGKS and DCPGV. A disordered region spans residues 481-502; it reads VVPEAAQNNPGEEVTETAGEGS. S504 is subject to Phosphoserine. Positions 555 to 589 are enriched in acidic residues; it reads LEEELESFSDEEEEEQEQQRDDAEESSSEPEEENV. Disordered stretches follow at residues 555–594 and 630–731; these read LEEE…NDTK and EKIF…RQKQ. Composition is skewed to basic and acidic residues over residues 630 to 652 and 662 to 671; these read EKIF…DRAP and QREEEQEHSN. 2 stretches are compositionally biased toward basic residues: residues 681 to 695 and 721 to 731; these read ERRR…KKVG and KHKRKKFRQKQ.

The protein belongs to the TRAFAC class YlqF/YawG GTPase family. NOG2 subfamily. Interacts with LYAR and RPL23A. Interacts with the nuclear importin-beta receptor and, at a lower extent, with importin-alpha. Widely expressed, with the highest expression level in testis.

Its subcellular location is the nucleus. It localises to the nucleolus. GTPase that associates with pre-60S ribosomal subunits in the nucleolus and is required for their nuclear export and maturation. May promote cell proliferation possibly by increasing p53/TP53 protein levels, and consequently those of its downstream product CDKN1A/p21, and decreasing RPL23A protein levels. In Homo sapiens (Human), this protein is Nucleolar GTP-binding protein 2 (GNL2).